A 557-amino-acid polypeptide reads, in one-letter code: Potassium-transporting ATPase potassium-binding subunit (557 aa).

12 helical membrane-spanning segments follow: residues 5–25, 63–83, 132–152, 170–190, 253–273, 283–303, 329–349, 356–376, 379–399, 416–436, 484–504, and 526–546; these read GFLL…PLGS, LCAI…MLLG, GLTV…FALI, LLRI…LFFI, FVQM…FGEV, LLWA…WAEV, VLVS…AVIA, ALGG…FGGV, GLYG…LMIG, LTAL…ALAM, LLAL…MAIA, and LFVG…FIPA.

This sequence belongs to the KdpA family. In terms of assembly, the system is composed of three essential subunits: KdpA, KdpB and KdpC.

The protein resides in the cell inner membrane. In terms of biological role, part of the high-affinity ATP-driven potassium transport (or Kdp) system, which catalyzes the hydrolysis of ATP coupled with the electrogenic transport of potassium into the cytoplasm. This subunit binds the periplasmic potassium ions and delivers the ions to the membrane domain of KdpB through an intramembrane tunnel. This Escherichia coli O81 (strain ED1a) protein is Potassium-transporting ATPase potassium-binding subunit.